The primary structure comprises 305 residues: Putative monooxygenase p33MONOX (305 aa).

The segment at 37-56 is disordered; it reads LEDPAPMTPPPSDMGSVPWK. Thr-44 bears the Phosphothreonine mark. A Flavin-containing monooxygenase motif motif is present at residues 67 to 77; that stretch reads LAKVEEGEASL. Disordered regions lie at residues 158–236 and 259–305; these read QSGE…KYDS and QANR…PTGF. Residues 169–183 show a composition bias toward low complexity; sequence PASAQSTPSTTPHSS. A Phosphothreonine modification is found at Thr-175. Phosphoserine occurs at positions 182 and 183. Residues 193-210 show a composition bias toward polar residues; that stretch reads TSGSSTALPGPNPSTMDS.

The protein belongs to the P33MONOX family. As to quaternary structure, interacts with NELFB, NOL12 and PRNP. In terms of tissue distribution, down-regulated in the occipital lobe of an early stage Alzheimer disease patients.

The protein localises to the cytoplasm. Its function is as follows. Potential NADPH-dependent oxidoreductase. May be involved in the regulation of neuronal survival, differentiation and axonal outgrowth. This is Putative monooxygenase p33MONOX (KIAA1191) from Homo sapiens (Human).